A 396-amino-acid chain; its full sequence is Tryptophan synthase beta chain (396 aa).

Position 86 is an N6-(pyridoxal phosphate)lysine (Lys-86).

The protein belongs to the TrpB family. Tetramer of two alpha and two beta chains. The cofactor is pyridoxal 5'-phosphate.

It catalyses the reaction (1S,2R)-1-C-(indol-3-yl)glycerol 3-phosphate + L-serine = D-glyceraldehyde 3-phosphate + L-tryptophan + H2O. The protein operates within amino-acid biosynthesis; L-tryptophan biosynthesis; L-tryptophan from chorismate: step 5/5. Functionally, the beta subunit is responsible for the synthesis of L-tryptophan from indole and L-serine. This chain is Tryptophan synthase beta chain, found in Francisella philomiragia subsp. philomiragia (strain ATCC 25017 / CCUG 19701 / FSC 153 / O#319-036).